The chain runs to 353 residues: Sorbitol dehydrogenase (353 aa).

A Zn(2+)-binding site is contributed by Cys45. Tyr51 is a binding site for substrate. Zn(2+) is bound by residues His70 and Glu71. Glu156 is a binding site for substrate. NAD(+) contacts are provided by residues Val184, Asp204, Arg209, 271-273 (VGL), and 296-298 (IFR). Substrate-binding residues include Arg298 and Tyr299.

The protein belongs to the zinc-containing alcohol dehydrogenase family. In terms of assembly, homotetramer. Zn(2+) serves as cofactor.

It catalyses the reaction keto-D-fructose + NADH + H(+) = D-sorbitol + NAD(+). The catalysed reaction is xylitol + NAD(+) = D-xylulose + NADH + H(+). The enzyme catalyses L-iditol + NAD(+) = keto-L-sorbose + NADH + H(+). In terms of biological role, polyol dehydrogenase that catalyzes the NAD(+)-dependent oxidation of various sugar alcohols. Is mostly active with D-sorbitol (D-glucitol), xylitol and L-iditol as substrates, leading to the C2-oxidized products D-fructose, D-xylulose and L-sorbose, respectively. The sequence is that of Sorbitol dehydrogenase from Bacillus subtilis (strain 168).